A 262-amino-acid polypeptide reads, in one-letter code: Versicolorin reductase 1 (262 aa).

I21, D67, N94, and R127 together coordinate NADP(+). Active-site proton donor residues include S143 and S144. NADP(+) is bound by residues Y158, K162, I191, and T193. The active-site Proton acceptor is Y158. K162 acts as the Lowers pKa of active site Tyr in catalysis.

This sequence belongs to the short-chain dehydrogenases/reductases (SDR) family.

It is found in the cytoplasm. Its subcellular location is the cytosol. It carries out the reaction (4S,8R)-2,13,16,20-tetrahydroxy-7,9-dioxapentacyclo[10.8.0.0(3,10).0(4,8).0(14,19)]icosa-1(12),2,5,10,13,16,19-heptaen-18-one + NADPH + H(+) = (4S,8R,16R)-2,13,16,20-tetrahydroxy-7,9-dioxapentacyclo[10.8.0.0(3,10).0(4,8).0(14,19)]icosa-1(12),2,5,10,13,19-hexaen-18-one + NADP(+). It functions in the pathway mycotoxin biosynthesis; aflatoxin biosynthesis. Its function is as follows. Cytochrome P450 monooxygenase; part of the gene cluster that mediates the biosynthesis of aflatoxins, a group of polyketide-derived furanocoumarins, and part of the most toxic and carcinogenic compounds among the known mycotoxins. The four major aflatoxins produced by A.parasiticus are aflatoxin B1 (AFB1), aflatoxin B2 (AFB2), aflatoxin G1 (AFG1) and aflatoxin G2 (AFG2). Within the aflatoxin pathway, with the cytochrome P450 monooxygenase aflN, the versicolorin reductase aflM, is involved in conversion of VERA to demethylsterigmatocystin (DMST). The biosynthesis of aflatoxins begins with the norsolorinic acid synthase aflC that combines a hexanoyl starter unit produced by the fatty acid synthase aflA/aflB and 7 malonyl-CoA extender units to synthesize the precursor NOR. The second step is the conversion of NOR to averantin and requires the norsolorinic acid ketoreductase aflD, which catalyzes the dehydration of norsolorinic acid to form (1'S)-averantin. The norsolorinic acid reductases aflE and aflF may also play a role in the conversion of NOR to AVN. The cytochrome P450 monooxygenase aflG then catalyzes the hydroxylation of AVN to 5'hydroxyaverantin (HAVN). The next step is performed by the 5'-hydroxyaverantin dehydrogenase aflH that transforms HAVN to 5'-oxoaverantin (OAVN) which is further converted to averufin (AVF) by aflK that plays a dual role in the pathway, as a 5'-oxoaverantin cyclase that mediates conversion of 5'-oxoaverantin, as well as a versicolorin B synthase in a later step in the pathway. The averufin oxidase aflI catalyzes the conversion of AVF to versiconal hemiacetal acetate (VHA). VHA is then the substrate for the versiconal hemiacetal acetate esterase aflJ to yield versiconal (VAL). Versicolorin B synthase aflK then converts VAL to versicolorin B (VERB) by closing the bisfuran ring of aflatoxin which is required for DNA-binding, thus giving to aflatoxin its activity as a mutagen. Then, the activity of the versicolorin B desaturase aflL leads to versicolorin A (VERA). A branch point starts from VERB since it can also be converted to dihydrodemethylsterigmatocystin (DMDHST), probably also by aflL, VERA being a precursor for aflatoxins B1 and G1, and DMDHST for aflatoxins B2 and G2. Next, the versicolorin reductase aflM and the cytochrome P450 monooxygenase aflN are involved in conversion of VERA to demethylsterigmatocystin (DMST). AflX and aflY seem also involved in this step, through probable aflX-mediated epoxide ring-opening step following versicolorin A oxidation and aflY-mediated Baeyer-Villiger oxidation required for the formation of the xanthone ring. The methyltransferase aflO then leads to the modification of DMST to sterigmatocystin (ST), and of DMDHST to dihydrosterigmatocystin (DHST). Both ST and DHST are then substrates of the O-methyltransferase aflP to yield O-methylsterigmatocystin (OMST) and dihydro-O-methylsterigmatocystin (DHOMST), respectively. Finally OMST is converted to aflatoxins B1 and G1, and DHOMST to aflatoxins B2 and G2, via the action of several enzymes including O-methylsterigmatocystin oxidoreductase aflQ, the cytochrome P450 monooxygenase aflU, but also the NADH-dependent flavin oxidoreductase nadA which is specifically required for the synthesis of AFG1. In Aspergillus parasiticus (strain ATCC 56775 / NRRL 5862 / SRRC 143 / SU-1), this protein is Versicolorin reductase 1.